Consider the following 286-residue polypeptide: Polyamine aminopropyltransferase (286 aa).

Positions 5–238 (TMWHETLHDQ…GIMTFAWATN (234 aa)) constitute a PABS domain. Gln33 lines the S-methyl-5'-thioadenosine pocket. His64 and Asp88 together coordinate spermidine. S-methyl-5'-thioadenosine contacts are provided by residues Glu108 and 140-141 (DG). The Proton acceptor role is filled by Asp158. Residue 158–161 (DCTD) participates in spermidine binding. Pro165 is an S-methyl-5'-thioadenosine binding site.

The protein belongs to the spermidine/spermine synthase family. Homodimer or homotetramer.

It is found in the cytoplasm. The catalysed reaction is S-adenosyl 3-(methylsulfanyl)propylamine + putrescine = S-methyl-5'-thioadenosine + spermidine + H(+). It functions in the pathway amine and polyamine biosynthesis; spermidine biosynthesis; spermidine from putrescine: step 1/1. Functionally, catalyzes the irreversible transfer of a propylamine group from the amino donor S-adenosylmethioninamine (decarboxy-AdoMet) to putrescine (1,4-diaminobutane) to yield spermidine. The polypeptide is Polyamine aminopropyltransferase (Salmonella paratyphi B (strain ATCC BAA-1250 / SPB7)).